A 154-amino-acid chain; its full sequence is Prefoldin subunit 5 (154 aa).

A2 carries the post-translational modification N-acetylalanine. K42 is modified (N6-acetyllysine). Residue S56 is modified to Phosphoserine.

This sequence belongs to the prefoldin subunit alpha family. Heterohexamer of two PFD-alpha type and four PFD-beta type subunits.

The protein resides in the nucleus. Binds specifically to cytosolic chaperonin (c-CPN) and transfers target proteins to it. Binds to nascent polypeptide chain and promotes folding in an environment in which there are many competing pathways for nonnative proteins. Represses the transcriptional activity of MYC. This Mus musculus (Mouse) protein is Prefoldin subunit 5 (Pfdn5).